The primary structure comprises 99 residues: Large ribosomal subunit protein eL36 (99 aa).

This sequence belongs to the eukaryotic ribosomal protein eL36 family. As to quaternary structure, component of the large ribosomal subunit. Mature ribosomes consist of a small (40S) and a large (60S) subunit. The 40S subunit contains about 32 different proteins and 1 molecule of RNA (18S). The 60S subunit contains 45 different proteins and 3 molecules of RNA (25S, 5.8S and 5S).

It localises to the cytoplasm. Functionally, component of the ribosome, a large ribonucleoprotein complex responsible for the synthesis of proteins in the cell. The small ribosomal subunit (SSU) binds messenger RNAs (mRNAs) and translates the encoded message by selecting cognate aminoacyl-transfer RNA (tRNA) molecules. The large subunit (LSU) contains the ribosomal catalytic site termed the peptidyl transferase center (PTC), which catalyzes the formation of peptide bonds, thereby polymerizing the amino acids delivered by tRNAs into a polypeptide chain. The nascent polypeptides leave the ribosome through a tunnel in the LSU and interact with protein factors that function in enzymatic processing, targeting, and the membrane insertion of nascent chains at the exit of the ribosomal tunnel. The sequence is that of Large ribosomal subunit protein eL36 from Candida albicans (strain SC5314 / ATCC MYA-2876) (Yeast).